The following is a 366-amino-acid chain: Carbamoyl phosphate synthase small chain (366 aa).

Residues 1–170 (MLKKRYLVLE…TKSPYVSTGY (170 aa)) are CPSase. 3 residues coordinate L-glutamine: S47, G221, and G223. A Glutamine amidotransferase type-1 domain is found at 173-360 (SVVLVDFGKK…IDMINEYKTK (188 aa)). C248 serves as the catalytic Nucleophile. L-glutamine-binding residues include L249, Q252, N290, G292, and Y293. Residues H333 and E335 contribute to the active site.

The protein belongs to the CarA family. Composed of two chains; the small (or glutamine) chain promotes the hydrolysis of glutamine to ammonia, which is used by the large (or ammonia) chain to synthesize carbamoyl phosphate. Tetramer of heterodimers (alpha,beta)4.

The enzyme catalyses hydrogencarbonate + L-glutamine + 2 ATP + H2O = carbamoyl phosphate + L-glutamate + 2 ADP + phosphate + 2 H(+). The catalysed reaction is L-glutamine + H2O = L-glutamate + NH4(+). It participates in amino-acid biosynthesis; L-arginine biosynthesis; carbamoyl phosphate from bicarbonate: step 1/1. It functions in the pathway pyrimidine metabolism; UMP biosynthesis via de novo pathway; (S)-dihydroorotate from bicarbonate: step 1/3. Its function is as follows. Small subunit of the glutamine-dependent carbamoyl phosphate synthetase (CPSase). CPSase catalyzes the formation of carbamoyl phosphate from the ammonia moiety of glutamine, carbonate, and phosphate donated by ATP, constituting the first step of 2 biosynthetic pathways, one leading to arginine and/or urea and the other to pyrimidine nucleotides. The small subunit (glutamine amidotransferase) binds and cleaves glutamine to supply the large subunit with the substrate ammonia. The polypeptide is Carbamoyl phosphate synthase small chain (Staphylococcus saprophyticus subsp. saprophyticus (strain ATCC 15305 / DSM 20229 / NCIMB 8711 / NCTC 7292 / S-41)).